The primary structure comprises 1875 residues: Nonribosomal peptide synthetase otaB (1875 aa).

The segment at 202–590 (GQVRENGDRA…SIRFAGRRQA (389 aa)) is adenylation 1. One can recognise a Carrier domain in the interval 724–800 (SPMTAAERVM…DLVAHIKDAG (77 aa)). Ser-761 carries the post-translational modification O-(pantetheine 4'-phosphoryl)serine. The segment at 836 to 1245 (EDVYPCTTLQ…LVSPLDEERL (410 aa)) is condensation. The segment at 1264 to 1659 (QKQSYAQPQA…ARKDTQVKIR (396 aa)) is adenylation 2.

Belongs to the NRP synthetase family.

It carries out the reaction 7-carboxymellein + L-phenylalanine + ATP = ochratoxin B + ADP + phosphate + H(+). It functions in the pathway mycotoxin biosynthesis. Functionally, nonribosomal peptide synthetase; part of the gene cluster that mediates the biosynthesis of ochratoxin A (OTA), a mycotoxin composed of a chlorinated type I polyketide dihydroisocoumarin moiety linked to L-phenylalanine, and demonstrated to have nephrotoxic, immunotoxic, genotoxic, neurotoxic, and teratogenic properties. OtaB is responsible for the linking of phenylalanine to the dihydroisocoumarin ring. The pathway begins with the highly reducing polyketide synthase otaA that catalyzes the formation of the isocoumarin group during the initial stages of biosynthesis, starting from one acetate and 4 malonate units, to originate the characteristic pentaketide skeleton 7-methylmellein (7-MM) of the OTA molecule. The newly identified cyclase otaY might be involved in the polyketide cyclization reaction during the initial steps of the OTA biosynthesis. 7-MM is then oxidized into 7-carboxymellein (also called ochratoxin beta) by the cytochrome P450 monooxygenase otaC. The NRPS encoded by the otaB gene is involved in the linking of phenylalanine to the dihydroisocoumarin ring. The reaction catalyzed by NRPS results in the production of ochratoxin B (OTB), which is the non-chlorinated analog of OTA and which subsequently serves as the substrate of the halogenase otaD for chlorination activity to form the final molecular structure of OTA, containing a chlorine atom in the C-5 position of the molecule. The polypeptide is Nonribosomal peptide synthetase otaB (Aspergillus carbonarius (strain ITEM 5010)).